The sequence spans 428 residues: Histone deacetylase 3 (428 aa).

The interval 3–316 (KTVAYFYDPD…WTYETSLLVE (314 aa)) is histone deacetylase. 1D-myo-inositol 1,4,5,6-tetrakisphosphate is bound by residues His17, Gly21, and Lys25. Residue His135 is part of the active site. Residues Asp170, His172, and Asp259 each coordinate Zn(2+). Arg265 serves as a coordination point for 1D-myo-inositol 1,4,5,6-tetrakisphosphate. 2 stretches are compositionally biased toward basic and acidic residues: residues 388 to 405 (DRTDEADAEERGPEENYS) and 415 to 428 (DGDHDNDKESDVEI). Residues 388-428 (DRTDEADAEERGPEENYSRPEAPNEFYDGDHDNDKESDVEI) form a disordered region. Ser424 is subject to Phosphoserine.

This sequence belongs to the histone deacetylase family. HD type 1 subfamily. As to quaternary structure, interacts with HDAC7 and HDAC9. Interacts with HDAC10, DAXX and DACH1. Found in a complex with NCOR1 and NCOR2. Component of the N-Cor repressor complex, at least composed of NCOR1, NCOR2, HDAC3, TBL1X, TBL1R, CORO2A and GPS2. Interacts with BCOR, MJD2A/JHDM3A, NRIP1, PRDM6 and SRY. Interacts with BTBD14B. Interacts with GLIS2. Interacts (via the DNA-binding domain) with NR2C1; the interaction recruits phosphorylated NR2C1 to PML bodies for sumoylation. Component of the Notch corepressor complex. Interacts with CBFA2T3 and NKAP. Interacts with APEX1; the interaction is not dependent on the acetylated status of APEX1. Interacts with and deacetylates MAPK14. Interacts with ZMYND15. Interacts with SMRT/NCOR2 and BCL6 on DNA enhancer elements. Interacts with INSM1. Interacts with XBP1; the interaction occurs in endothelial cell (EC) under disturbed flow. Interacts (via C-terminus) with CCAR2 (via N-terminus). Interacts with and deacetylates MEF2D. Interacts with BEND3. Interacts with NKAPL. Interacts with DHX36; this interaction occurs in a RNA-dependent manner. Interacts weakly with CRY1; this interaction is enhanced in the presence of FBXL3. Interacts with FBXL3 and BMAL1. Interacts with NCOR1. Interacts with RARA. Interacts with SETD5. In terms of processing, deubiquitinated on 'Lys-63'-linked ubiquitin chains by USP38; leading to a decreased level of histone acetylation. Post-translationally, sumoylated in vitro.

It localises to the nucleus. The protein localises to the chromosome. Its subcellular location is the cytoplasm. The protein resides in the cytosol. The enzyme catalyses N(6)-acetyl-L-lysyl-[histone] + H2O = L-lysyl-[histone] + acetate. It catalyses the reaction N(6)-acetyl-L-lysyl-[protein] + H2O = L-lysyl-[protein] + acetate. It carries out the reaction N(6)-(2E)-butenoyl-L-lysyl-[protein] + H2O = (2E)-2-butenoate + L-lysyl-[protein]. The catalysed reaction is N(6)-(2-hydroxyisobutanoyl)-L-lysyl-[protein] + H2O = 2-hydroxy-2-methylpropanoate + L-lysyl-[protein]. The enzyme catalyses N(6)-[(S)-lactoyl]-L-lysyl-[protein] + H2O = (S)-lactate + L-lysyl-[protein]. With respect to regulation, inositol tetraphosphate (1D-myo-inositol 1,4,5,6-tetrakisphosphate) promotes the histone deacetylase activity by acting as an intermolecular glue between HDAC3 and NCOR2, thereby promoting its association with the N-Cor complex, a prerequisite for the histone deacetylase activity. Its function is as follows. Histone deacetylase that catalyzes the deacetylation of lysine residues on the N-terminal part of the core histones (H2A, H2B, H3 and H4), and some other non-histone substrates. Histone deacetylation gives a tag for epigenetic repression and plays an important role in transcriptional regulation, cell cycle progression and developmental events. Histone deacetylases act via the formation of large multiprotein complexes, such as N-Cor repressor complex, which activate the histone deacetylase activity. Participates in the BCL6 transcriptional repressor activity by deacetylating the H3 'Lys-27' (H3K27) on enhancer elements, antagonizing EP300 acetyltransferase activity and repressing proximal gene expression. Acts as a molecular chaperone for shuttling phosphorylated NR2C1 to PML bodies for sumoylation. Contributes, together with XBP1 isoform 1, to the activation of NFE2L2-mediated HMOX1 transcription factor gene expression in a PI(3)K/mTORC2/Akt-dependent signaling pathway leading to endothelial cell (EC) survival under disturbed flow/oxidative stress. Regulates both the transcriptional activation and repression phases of the circadian clock in a deacetylase activity-independent manner. During the activation phase, promotes the accumulation of ubiquitinated BMAL1 at the E-boxes and during the repression phase, blocks FBXL3-mediated CRY1/2 ubiquitination and promotes the interaction of CRY1 and BMAL1. The NCOR1-HDAC3 complex regulates the circadian expression of the core clock gene BMAL1 and the genes involved in lipid metabolism in the liver. Also functions as a deacetylase for non-histone targets, such as KAT5, MEF2D, MAPK14, RARA and STAT3. Serves as a corepressor of RARA, mediating its deacetylation and repression, leading to inhibition of RARE DNA element binding. In association with RARA, plays a role in the repression of microRNA-10a and thereby in the inflammatory response. In addition to protein deacetylase activity, also acts as a protein-lysine deacylase by recognizing other acyl groups: catalyzes removal of (2E)-butenoyl (crotonyl), lactoyl (lactyl) and 2-hydroxyisobutanoyl (2-hydroxyisobutyryl) acyl groups from lysine residues, leading to protein decrotonylation, delactylation and de-2-hydroxyisobutyrylation, respectively. Catalyzes decrotonylation of MAPRE1/EB1. Mediates delactylation NBN/NBS1, thereby inhibiting DNA double-strand breaks (DSBs) via homologous recombination (HR). This is Histone deacetylase 3 (HDAC3) from Pongo abelii (Sumatran orangutan).